We begin with the raw amino-acid sequence, 319 residues long: MINITAITTEHQLLKNIPIERVEQPDIAWYWVDFYGPEDTETALLRDFFHFHPLAIEDCFQHMQRPKLDHYDGYRFYVIHALNKETLETEEVDIFQGEKFVVTFHLHETPGIAKVRERLYASPDILKKGPGHISYMIMDQLVDEYFPLVYKIEDRLNEIEESRPHKTYGTLMNEVFDLRTDLLHLRRTIIPMRDLLYRILSLDHVKEQRETKAYFSDIYDHLLKLSEIVESNRDMTSDLRDSYVTLNSNRMNAIMMTLTIVSTIFIPLTFIAGVYGMNFDFMPELHWKYGYFAVLGLMAALVIGMLIWFVHKGWFNIFK.

Helical transmembrane passes span 254–274 and 290–310; these read IMMT…IAGV and GYFA…IWFV.

The protein belongs to the CorA metal ion transporter (MIT) (TC 1.A.35) family.

It is found in the cell membrane. The protein is Putative metal ion transporter YfjQ (yfjQ) of Bacillus subtilis (strain 168).